Consider the following 470-residue polypeptide: Sugar transporter ESL1 (470 aa).

The Essential for the localization to the vacuole membrane motif lies at Leu-10–Leu-16. A run of 12 helical transmembrane segments spans residues Ile-28–Cys-48, Val-68–Phe-88, Lys-99–Ala-119, Leu-130–Ile-150, Gly-157–Ile-177, Leu-186–Glu-206, Val-268–Tyr-288, Ile-303–Val-323, Leu-332–Phe-352, Ile-368–Ile-388, Leu-404–Leu-424, and Gly-430–Val-450.

This sequence belongs to the major facilitator superfamily. Sugar transporter (TC 2.A.1.1) family. In terms of tissue distribution, expressed in both shoots and roots. In roots, strongly expressed in pericycle and xylem parenchyma cells, and to a lesser extent in the root endodermis. In flowers, expressed in sepals.

It localises to the vacuole membrane. Its subcellular location is the vesicle. In terms of biological role, sugar transporter. Transports monosaccharides across the vacuolar membrane independently from a proton gradient. May function coordinately with the vacuolar invertase to regulate osmotic pressure by affecting the accumulation of sugar in the cells under abiotic stress conditions. This Arabidopsis thaliana (Mouse-ear cress) protein is Sugar transporter ESL1.